Consider the following 429-residue polypeptide: MDRIRIVGGNKLNGTIPISGAKNAALPLMIAALLTDETLILENVPRLADVALLQRILGNHGVDIMSAGKRPGDREHQGQTLHISAANIIDTTAPYDLVSKMRASFWVIGPLLARMKEANVSLPGGCAIGTRPVDLLIMALEKLGAEIVIDGGYAVARAPQGLHGAEIEFPKVTVSGTHVALMAATLAKGTTVITNAACEPEIADVADCLNKMGAKITGAGTSRIVIEGVEKLHGARHAVLPDRIEAGTYAMAVAMTGGDVQLQGARPELMQAALDVLIEAGATITQTNEGIRVQRNGSGIRPVDVSTSPFPGFPTDLQAQLMALMTRAEGSSRITETIFENRFMHVQELARFGARIALDGETATIEGRPKLRGAPVMATDLRASVSLVIAALAAEGETMVNRIYHLDRGFERLEDKLSACGATIERISG.

22 to 23 (KN) contributes to the phosphoenolpyruvate binding site. R102 lines the UDP-N-acetyl-alpha-D-glucosamine pocket. C126 acts as the Proton donor in catalysis. 2-(S-cysteinyl)pyruvic acid O-phosphothioketal is present on C126. Residues 131–135 (RPVDL), D316, and I338 each bind UDP-N-acetyl-alpha-D-glucosamine.

It belongs to the EPSP synthase family. MurA subfamily.

It localises to the cytoplasm. The enzyme catalyses phosphoenolpyruvate + UDP-N-acetyl-alpha-D-glucosamine = UDP-N-acetyl-3-O-(1-carboxyvinyl)-alpha-D-glucosamine + phosphate. It participates in cell wall biogenesis; peptidoglycan biosynthesis. Functionally, cell wall formation. Adds enolpyruvyl to UDP-N-acetylglucosamine. The protein is UDP-N-acetylglucosamine 1-carboxyvinyltransferase of Afipia carboxidovorans (strain ATCC 49405 / DSM 1227 / KCTC 32145 / OM5) (Oligotropha carboxidovorans).